We begin with the raw amino-acid sequence, 212 residues long: 3-isopropylmalate dehydratase small subunit (212 aa).

This sequence belongs to the LeuD family. LeuD type 1 subfamily. As to quaternary structure, heterodimer of LeuC and LeuD.

The enzyme catalyses (2R,3S)-3-isopropylmalate = (2S)-2-isopropylmalate. It functions in the pathway amino-acid biosynthesis; L-leucine biosynthesis; L-leucine from 3-methyl-2-oxobutanoate: step 2/4. Functionally, catalyzes the isomerization between 2-isopropylmalate and 3-isopropylmalate, via the formation of 2-isopropylmaleate. The polypeptide is 3-isopropylmalate dehydratase small subunit (Pseudomonas aeruginosa (strain LESB58)).